The following is a 1406-amino-acid chain: DNA-directed RNA polymerase subunit beta' (1406 aa).

4 residues coordinate Zn(2+): cysteine 70, cysteine 72, cysteine 85, and cysteine 88. Residues aspartate 460, aspartate 462, and aspartate 464 each contribute to the Mg(2+) site. Zn(2+) is bound by residues cysteine 814, cysteine 888, cysteine 895, and cysteine 898.

It belongs to the RNA polymerase beta' chain family. As to quaternary structure, the RNAP catalytic core consists of 2 alpha, 1 beta, 1 beta' and 1 omega subunit. When a sigma factor is associated with the core the holoenzyme is formed, which can initiate transcription. The cofactor is Mg(2+). It depends on Zn(2+) as a cofactor.

The enzyme catalyses RNA(n) + a ribonucleoside 5'-triphosphate = RNA(n+1) + diphosphate. Functionally, DNA-dependent RNA polymerase catalyzes the transcription of DNA into RNA using the four ribonucleoside triphosphates as substrates. This Yersinia enterocolitica serotype O:8 / biotype 1B (strain NCTC 13174 / 8081) protein is DNA-directed RNA polymerase subunit beta'.